We begin with the raw amino-acid sequence, 875 residues long: Ubiquitin-protein ligase E3A (875 aa).

The segment at 44–83 (CGNEACTNEFCASCPTFLRMDNNAAAIKALELYKINAKLC) adopts a C4-type; atypical zinc-finger fold. The segment covering 175 to 186 (KEELKSLQAKDE) has biased composition (basic and acidic residues). Positions 175–226 (KEELKSLQAKDEDKDEDEKEKAACSAAAMEEDSEASSSRIGDSSQGDNNLQK) are disordered. Polar residues predominate over residues 213 to 225 (RIGDSSQGDNNLQ). Phosphoserine is present on Ser-218. The segment at 401 to 418 (IPESSELTLQELLGEERR) is E6-binding. The segment at 418–517 (RNKKGPRVDP…TVLYSLVQGQ (100 aa)) is interaction with HCV core protein. At Tyr-659 the chain carries Phosphotyrosine; by ABL1. Residues 776 to 875 (YDGGYTRDSV…ITYAKGFGML (100 aa)) enclose the HECT domain. Catalysis depends on Cys-843, which acts as the Glycyl thioester intermediate.

The active form is probably a homotrimer. Binds UBQLN1 and UBQLN2. Interacts with the 26S proteasome. Interacts with BPY2. Interacts with HIF1AN, MAPK6 and NEURL4; interaction with MAPK6 may be mediated by NEURL4. Interacts with the proteasomal subunit PSMD4. Interacts with ESR1 and WBP2. Interacts with BMAL1. Interacts with ARC. As to quaternary structure, (Microbial infection) Interacts with HCV core protein and targets it to degradation. In terms of assembly, (Microbial infection) Interacts with the E6 protein of the cancer-associated human papillomavirus types 16 and 18. The E6/E6-AP complex binds to and targets the p53/TP53 tumor-suppressor protein for ubiquitin-mediated proteolysis. Post-translationally, phosphorylation at Tyr-659 by ABL1 impairs E3 ligase activity and protects p53/TP53 from degradation in (HPV)-infected cells.

Its subcellular location is the cytoplasm. It is found in the nucleus. It catalyses the reaction S-ubiquitinyl-[E2 ubiquitin-conjugating enzyme]-L-cysteine + [acceptor protein]-L-lysine = [E2 ubiquitin-conjugating enzyme]-L-cysteine + N(6)-ubiquitinyl-[acceptor protein]-L-lysine.. It functions in the pathway protein modification; protein ubiquitination. In terms of biological role, E3 ubiquitin-protein ligase which accepts ubiquitin from an E2 ubiquitin-conjugating enzyme in the form of a thioester and transfers it to its substrates. Several substrates have been identified including the BMAL1, ARC, LAMTOR1, RAD23A and RAD23B, MCM7 (which is involved in DNA replication), annexin A1, the PML tumor suppressor, and the cell cycle regulator CDKN1B. Additionally, may function as a cellular quality control ubiquitin ligase by helping the degradation of the cytoplasmic misfolded proteins. Finally, UBE3A also promotes its own degradation in vivo. Plays an important role in the regulation of the circadian clock: involved in the ubiquitination of the core clock component BMAL1, leading to its proteasomal degradation. Acts as transcriptional coactivator of progesterone receptor PGR upon progesterone hormone activation. Acts as a regulator of synaptic development by mediating ubiquitination and degradation of ARC. Required for synaptic remodeling in neurons by mediating ubiquitination and degradation of LAMTOR1, thereby limiting mTORC1 signaling and activity-dependent synaptic remodeling. Synergizes with WBP2 in enhancing PGR activity. Functionally, (Microbial infection) Catalyzes the high-risk human papilloma virus E6-mediated ubiquitination of p53/TP53, contributing to the neoplastic progression of cells infected by these viruses. The chain is Ubiquitin-protein ligase E3A from Homo sapiens (Human).